The following is a 219-amino-acid chain: Polysialic acid transport ATP-binding protein KpsT (219 aa).

An ABC transporter domain is found at 2–218 (IKIENLTKSY…TEAIADYKKD (217 aa)). 38-45 (GQNGAGKS) contacts ATP.

The protein belongs to the ABC transporter superfamily.

Its subcellular location is the cell inner membrane. Its function is as follows. Putative ATP-binding protein, and an energy coupling component for the transport of polysialic acid across the cytoplasmic membrane. The polypeptide is Polysialic acid transport ATP-binding protein KpsT (kpsT) (Escherichia coli).